A 103-amino-acid polypeptide reads, in one-letter code: Small ribosomal subunit protein uS10 (103 aa).

The segment at 35–59 is disordered; it reads LSGPVPLPTKTLEVPSRKSPDGEGT.

It belongs to the universal ribosomal protein uS10 family. Part of the 30S ribosomal subunit.

Its function is as follows. Involved in the binding of tRNA to the ribosomes. The polypeptide is Small ribosomal subunit protein uS10 (rps10) (Haloarcula marismortui (strain ATCC 43049 / DSM 3752 / JCM 8966 / VKM B-1809) (Halobacterium marismortui)).